A 304-amino-acid polypeptide reads, in one-letter code: Beta-lactamase-like protein str6 (304 aa).

The protein belongs to the beta-lactamase family.

Its pathway is mycotoxin biosynthesis. Its function is as follows. Beta-lactamase-like protein; part of the gene cluster that mediates the biosynthesis of strobilurin A, an antifungal polyketide that contains a key beta-methoxyacrylate toxophore that targets the complex III of the mitochondrial electron transport chain. Strobilurin biosynthesis begins with construction of benzoyl CoA by step-wise elimination of ammonia from phenylalanine by the phenylalanine ammonia-lyase str11, oxygenation by str8 and retro-Claisen reaction to form benzoic acid, which is activated to its CoA thiolester benzoyl CoA by the dedicated CoA ligase str10. Benzoyl CoA forms the starter unit for the highly reducing polyketide synthase stpks1 that produces the polyketide prestrobilutin A. The FAD-dependent oxygenase str9 then catalyzes the key oxidative rearrangement responsible for the creation of the beta-methoxyacrylate toxophore. Str9 performs epoxidation of the 2,3 olefin of prestrobilutin A, followed by Meinwald rearrangement to furnish the aldehyde intermediate. Rapid enolization of the aldehyde intermediate would give the beta-methoxyacrylate skeleton and methylations catalyzed by str2 and str3 complete the synthesis and lead to the production of strobilurin A. The short-chain dehydrogenase stl2 and the dehydrogenase str4 play a role in the shunt pathway leading to the production of bolineol. The cluster encodes no obvious halogenase gene that could be involved in production of strobilurin B, nor any obvious dimethylallyl-transferase that could be involved in the production of strobilurin G. It is possible that unknown proteins encoded in, or near, the cluster (such as str1 or stl1) may form new classes of halogenases or dimethylally-transferases, or that the responsible genes are located elsewhere on the genome. Similarly, proteins encoded by str5/str6 hydrolases appear to have no chemical role in the biosynthesis of strobilurin A. Finally, no obvious self-resistance gene is found within the cluster. This is Beta-lactamase-like protein str6 from Strobilurus tenacellus.